Reading from the N-terminus, the 484-residue chain is MTKVELAKLRTMIPEMRRVRRIHFIGIGGAGMGGIAEVLANEGYQISGSDIANNRVTEHLASLGAEIQIGHKPENVHGASVVVVSTAIHGDNPEVMAARELRIPVVRRAEMLAELMRYRHGIAIAGTHGKTTTTSLIASVYAQAGADPTFVIGGLLNSAGTNARLGTSRYLIAEADESDASFLHLQPMVAIVTNIEADHMDTYGGDFTKLRATFLEFLHNLPFYGLAVVCIDDPVIRELLPEIGRATITYGYSEDADVQVQEFVQEGSQSQFRLRLQDGSFLPLRLNLPGRHNALNAAATVAVALEDHIPTDAIVDALAQFAGVGRRFQQYGEFDTGAGKVLLVDDYGHHPTEVRATLAATRAAWPERRLVLVFQPHRYTRTRDLYDDFAEVLAKVDVLIMLDVYAAGEDPIPGADGRSLCRSIRQRGTLDPIFVATPAEVPGVLADVLKDGDVVLTQGAGNVGQLSRKLAELKLSINAMKTAI.

126 to 132 contributes to the ATP binding site; it reads GTHGKTT.

It belongs to the MurCDEF family.

Its subcellular location is the cytoplasm. It carries out the reaction UDP-N-acetyl-alpha-D-muramate + L-alanine + ATP = UDP-N-acetyl-alpha-D-muramoyl-L-alanine + ADP + phosphate + H(+). Its pathway is cell wall biogenesis; peptidoglycan biosynthesis. Its function is as follows. Cell wall formation. In Tolumonas auensis (strain DSM 9187 / NBRC 110442 / TA 4), this protein is UDP-N-acetylmuramate--L-alanine ligase.